The sequence spans 417 residues: E3 ubiquitin-protein ligase RNF135 (417 aa).

An RING-type zinc finger spans residues 21–67 (CIICQGLLDQPTTLPCGHSFCLRCLHDLWVSKRGAVDGCPWACPICR). 2 disordered regions span residues 95 to 118 (EVEAGSEPEPAPAPRSAPQVTVQK) and 143 to 173 (TQRPNLGSGQDNAQGTPPTDSSSEGEHSLDS). 2 coiled-coil regions span residues 121–145 (TNVIQELTDMVRQLVDDVKSLQTQR) and 180–204 (SISQKKIQEILHNLEEIQEKLQGSV). The segment covering 143 to 164 (TQRPNLGSGQDNAQGTPPTDSS) has biased composition (polar residues). One can recognise a B30.2/SPRY domain in the interval 225 to 417 (PDQRRPAPRK…NYLEIKQLNT (193 aa)).

As to quaternary structure, homodimer. Interacts (homodimer) with RIGI (double-stranded RNA-bound oligomeric form); involved in both RIGI ubiquitination, oligomerization into filaments associated with viral RNAs and the bridging of these filaments. Interacts with UBE2D3 and UBE2N; E2 ubiquitin ligases involved in RNF135-mediated ubiquitination of RIGI and activation of the RIG-I signaling pathway. Interacts with PCBP2. Ubiquitously expressed.

The protein localises to the cytoplasm. It localises to the stress granule. The catalysed reaction is S-ubiquitinyl-[E2 ubiquitin-conjugating enzyme]-L-cysteine + [acceptor protein]-L-lysine = [E2 ubiquitin-conjugating enzyme]-L-cysteine + N(6)-ubiquitinyl-[acceptor protein]-L-lysine.. It functions in the pathway protein modification; protein ubiquitination. E2-dependent E3 ubiquitin-protein ligase that functions as a RIGI coreceptor in the sensing of viral RNAs in cell cytoplasm and the activation of the antiviral innate immune response. Together with the UBE2D3, UBE2N and UB2V1 E2 ligases, catalyzes the 'Lys-63'-linked polyubiquitination of RIGI oligomerized on viral RNAs, an essential step in the activation of the RIG-I signaling pathway. Through a ubiquitin-independent parallel mechanism, which consists in bridging RIGI filaments forming on longer viral RNAs, further activates the RIG-I signaling pathway. This second mechanism that synergizes with the ubiquitin-dependent one would thereby allow an RNA length-dependent regulation of the RIG-I signaling pathway. Associated with the E2 ligase UBE2N, also constitutively synthesizes unanchored 'Lys-63'-linked polyubiquitin chains that may also activate the RIG-I signaling pathway. It is not involved in the innate immune response against DNA viruses. The protein is E3 ubiquitin-protein ligase RNF135 of Mus musculus (Mouse).